Reading from the N-terminus, the 420-residue chain is Gamma-glutamyl phosphate reductase (420 aa).

The protein belongs to the gamma-glutamyl phosphate reductase family.

Its subcellular location is the cytoplasm. It carries out the reaction L-glutamate 5-semialdehyde + phosphate + NADP(+) = L-glutamyl 5-phosphate + NADPH + H(+). Its pathway is amino-acid biosynthesis; L-proline biosynthesis; L-glutamate 5-semialdehyde from L-glutamate: step 2/2. Its function is as follows. Catalyzes the NADPH-dependent reduction of L-glutamate 5-phosphate into L-glutamate 5-semialdehyde and phosphate. The product spontaneously undergoes cyclization to form 1-pyrroline-5-carboxylate. The polypeptide is Gamma-glutamyl phosphate reductase (Streptococcus pneumoniae (strain ATCC 700669 / Spain 23F-1)).